Consider the following 1801-residue polypeptide: Laminin subunit beta-2 (1801 aa).

Positions 1–35 (MEWASGKPGRGRQGQPVPWELRLGLLLSVLAATLA) are cleaved as a signal peptide. The 240-residue stretch at 46–285 (SRGSCYPATG…ALYELVIRGN (240 aa)) folds into the Laminin N-terminal domain. Asn251 carries an N-linked (GlcNAc...) asparagine glycan. 19 disulfides stabilise this stretch: Cys286-Cys295, Cys288-Cys313, Cys315-Cys324, Cys327-Cys347, Cys350-Cys359, Cys352-Cys377, Cys380-Cys389, Cys392-Cys410, Cys413-Cys426, Cys415-Cys441, Cys443-Cys452, Cys455-Cys470, Cys473-Cys487, Cys475-Cys494, Cys496-Cys505, Cys508-Cys522, Cys525-Cys537, Cys527-Cys544, and Cys546-Cys555. Laminin EGF-like domains follow at residues 286-349 (CFCY…ACRK), 350-412 (CECN…ACRP), 413-472 (CDCD…GCQR), and 473-524 (CQCN…GCRP). Asn371 is a glycosylation site (N-linked (GlcNAc...) asparagine). The region spanning 525–555 (CDCDVGGALDPQCDEATGQCPCRPHMIGRRC) is the Laminin EGF-like 5; truncated domain. In terms of domain architecture, Laminin IV type B spans 564 to 780 (RPFLDHLTWE…LLISASSLVY (217 aa)). Intrachain disulfides connect Cys786-Cys798, Cys788-Cys805, Cys807-Cys816, Cys819-Cys831, Cys834-Cys846, Cys836-Cys853, Cys855-Cys864, Cys867-Cys877, Cys880-Cys889, Cys882-Cys896, Cys899-Cys908, Cys911-Cys927, Cys930-Cys946, Cys932-Cys957, Cys959-Cys968, Cys971-Cys986, Cys989-Cys1003, Cys991-Cys1010, Cys1013-Cys1022, Cys1025-Cys1038, Cys1041-Cys1061, Cys1043-Cys1068, Cys1070-Cys1079, Cys1082-Cys1095, Cys1098-Cys1110, Cys1100-Cys1117, Cys1119-Cys1128, Cys1131-Cys1143, Cys1146-Cys1158, Cys1148-Cys1165, Cys1167-Cys1176, and Cys1179-Cys1190. 8 consecutive Laminin EGF-like domains span residues 786 to 833 (CQCD…GCQA), 834 to 879 (CQCS…NCRP), 880 to 929 (CVCN…QCRP), 930 to 988 (CPCP…RCQL), 989 to 1040 (CECS…SCHR), 1041 to 1097 (CTCN…GCQP), 1098 to 1145 (CACH…QCRA), and 1146 to 1192 (CDCD…ACHP). A glycan (N-linked (GlcNAc...) asparagine) is linked at Asn1088. The interval 1193–1412 (CHACFGDWDR…LSLTGVNELV (220 aa)) is domain II. N-linked (GlcNAc...) asparagine glycosylation is present at Asn1252. The stretch at 1259-1306 (AKLVEATEGLRHEIGKTTERLTQLEAELTDVQDENFNANHALSGLERD) forms a coiled coil. Asn1311 and Asn1351 each carry an N-linked (GlcNAc...) asparagine glycan. Positions 1413–1445 (CGAPGDAPCATSPCGGAGCRDEDGQPRCGGLGC) are domain alpha. Residues 1446–1801 (SGAAATADLA…LQVQIYNTCQ (356 aa)) are domain I. Positions 1475-1529 (GILSRVSETRRQAEEAQQRAQAALDKANASRGQVEQANQELRELIQNVKDFLSQE) form a coiled coil. Asn1502 carries N-linked (GlcNAc...) asparagine glycosylation. Residue Ser1535 is modified to Phosphoserine. Residues 1576 to 1793 (LAHTMGDVRR…RSVLQAINLQ (218 aa)) adopt a coiled-coil conformation. Positions 1684 to 1694 (ASTAEETAGSA) are enriched in low complexity. Positions 1684–1703 (ASTAEETAGSAQSRAREAEK) are disordered.

In terms of assembly, laminin is a complex glycoprotein, consisting of three different polypeptide chains (alpha, beta, gamma), which are bound to each other by disulfide bonds into a cross-shaped molecule comprising one long and three short arms with globules at each end. Beta-2 is a subunit of laminin-3 (laminin-121 or S-laminin), laminin-4 (laminin-221 or S-merosin), laminin-7 (laminin-321 or KS-laminin), laminin-9 (laminin-421), laminin-11 (laminin-521), laminin-14 (laminin-423) and laminin-15 (laminin-523). As to expression, found in the basement membranes (major component). S-laminin is concentrated in the synaptic cleft of the neuromuscular junction.

The protein resides in the secreted. It localises to the extracellular space. It is found in the extracellular matrix. The protein localises to the basement membrane. Its function is as follows. Binding to cells via a high affinity receptor, laminin is thought to mediate the attachment, migration and organization of cells into tissues during embryonic development by interacting with other extracellular matrix components. This Rattus norvegicus (Rat) protein is Laminin subunit beta-2 (Lamb2).